Consider the following 250-residue polypeptide: Cobalt transport protein CbiM (250 aa).

Positions 1-27 (MKKPLFFIASACVTIYILFALSPSVYA) are cleaved as a signal peptide. 6 helical membrane-spanning segments follow: residues 33 to 53 (GFLPWQWALVWWLLFLPFFLV), 70 to 90 (LLLALATAFTFVLSALKIPSV), 102 to 122 (LGALLFGPFVMTVIGTAVLLF), 134 to 154 (TLGANAFSMAVVGPLVAYVLF), 168 to 188 (VFLAAMMADLATYVMTSIQLA), and 208 to 228 (IFAVTQIPLAITEGLLTVVVW).

It belongs to the CbiM family. Forms an energy-coupling factor (ECF) transporter complex composed of an ATP-binding protein (A component, CbiO), a transmembrane protein (T component, CbiQ) and 2 possible substrate-capture proteins (S components, CbiM and CbiN) of unknown stoichimetry.

Its subcellular location is the cell membrane. It functions in the pathway cofactor biosynthesis; adenosylcobalamin biosynthesis. In terms of biological role, part of the energy-coupling factor (ECF) transporter complex CbiMNOQ involved in cobalt import. This chain is Cobalt transport protein CbiM, found in Anoxybacillus flavithermus (strain DSM 21510 / WK1).